Here is a 414-residue protein sequence, read N- to C-terminus: Probable uracil permease (414 aa).

Topologically, residues 1-14 (MTNQIPPSLAENQS) are cytoplasmic. Residues 15–38 (KLKQSFVGLQMLFVAFGALVLVPL) traverse the membrane as a helical segment. Over 39 to 42 (ITGL) the chain is Periplasmic. The chain crosses the membrane as a helical span at residues 43–62 (DSNTALLTAGVGTLLFQFCT). Residues 63–65 (GKQ) are Cytoplasmic-facing. Residues 66-82 (VPIFLASSFAFIAPIQY) form a discontinuously helical membrane-spanning segment. Residue F74 coordinates uracil. Topologically, residues 83 to 91 (GVQTWGIAT) are periplasmic. Residues 92–112 (TMGGLAFTGLVYFALSTLVKL) form a helical membrane-spanning segment. Topologically, residues 113 to 124 (RGAEALQRFFPP) are cytoplasmic. A helical membrane pass occupies residues 125–146 (VVVGPVIIIIGMGLAPIAVDMS). Residues 147–155 (LGKNSAYAY) lie on the Periplasmic side of the membrane. A helical membrane pass occupies residues 156–171 (NDAVLVSMVTLLTTLS). The Cytoplasmic portion of the chain corresponds to 172-178 (VAVFAKG). The helical transmembrane segment at 179-199 (LMKLIPIMFGITAGYILCLFL) threads the bilayer. Over 200-224 (GLINFQPVIDAPWFSLPKLTTPEFN) the chain is Periplasmic. Residues 225–248 (LEAILYMLPIAIAPAVEHVGGIMA) form a helical membrane-spanning segment. A uracil-binding site is contributed by E241. Topologically, residues 249 to 261 (ISSVTGKDFLKKP) are cytoplasmic. Residues 262–281 (GLHRTLLGDGIATAAASLVG) traverse the membrane as a helical segment. The discontinuously helical transmembrane segment at 282–298 (GPPNTTYAEVTGAVMLT) threads the bilayer. E290 serves as a coordination point for uracil. Residues 299–301 (RNF) lie on the Cytoplasmic side of the membrane. Residues 302–319 (NPNIMTWAAVWAIAISFC) form a helical membrane-spanning segment. Topologically, residues 320–332 (GKVGAFLSTIPTI) are periplasmic. A helical membrane pass occupies residues 333 to 354 (VMGGIMMLVFGSIAVVGMSTLI). At 355 to 365 (RGKVDVTEARN) the chain is on the cytoplasmic side. An intramembrane region (discontinuously helical) is located at residues 366-401 (LCIISVVMTFGIGNMFVDVGNVSLKGISLCAIVAII). Over 402-414 (LNLVLPKAKNEVE) the chain is Cytoplasmic.

Belongs to the nucleobase:cation symporter-2 (NCS2) (TC 2.A.40) family.

The protein localises to the cell inner membrane. It catalyses the reaction uracil(in) + H(+)(in) = uracil(out) + H(+)(out). Functionally, transport of uracil in the cell. The chain is Probable uracil permease (uraA) from Haemophilus influenzae (strain ATCC 51907 / DSM 11121 / KW20 / Rd).